The following is a 267-amino-acid chain: Neuferricin (267 aa).

An N-terminal signal peptide occupies residues 1–17 (MLKYLVALISMVLAVWT). The 98-residue stretch at 53–150 (LLTKEQLSLY…RDYTPVGKLI (98 aa)) folds into the Cytochrome b5 heme-binding domain.

The protein belongs to the cytochrome b5 family. MAPR subfamily.

The protein resides in the secreted. Heme-binding protein which promotes neuronal but not astrocyte differentiation. This Danio rerio (Zebrafish) protein is Neuferricin (cyb5d2).